The sequence spans 96 residues: MNIRPLHDRVIIKREEVETRSAGGIVLTGSAATKSTRAKVLAVGKGRILENGTVQPLDVKIGDTVIFNDGYGVKAEKIDGEEVLIISENDILAIVE.

It belongs to the GroES chaperonin family. Heptamer of 7 subunits arranged in a ring. Interacts with the chaperonin GroEL.

It localises to the cytoplasm. Functionally, together with the chaperonin GroEL, plays an essential role in assisting protein folding. The GroEL-GroES system forms a nano-cage that allows encapsulation of the non-native substrate proteins and provides a physical environment optimized to promote and accelerate protein folding. GroES binds to the apical surface of the GroEL ring, thereby capping the opening of the GroEL channel. The polypeptide is Co-chaperonin GroES (Histophilus somni (strain 129Pt) (Haemophilus somnus)).